Reading from the N-terminus, the 268-residue chain is Norsolorinic acid ketoreductase nor1 (268 aa).

Ile32, Asp79, Asn108, Tyr182, Lys186, Val213, and Thr215 together coordinate NADP(+). Tyr182 serves as the catalytic Proton donor. Lys186 functions as the Lowers pKa of active site Tyr in the catalytic mechanism.

Belongs to the short-chain dehydrogenases/reductases (SDR) family.

It is found in the cytoplasm. The protein localises to the cytosol. Its subcellular location is the vacuole. It catalyses the reaction (1'S)-averantin + NADP(+) = norsolorinic acid + NADPH + H(+). Its pathway is mycotoxin biosynthesis. In terms of biological role, norsolorinic acid ketoreductase; part of the fragmented gene cluster that mediates the biosynthesis of dothistromin (DOTH), a polyketide toxin very similar in structure to the aflatoxin precursor, versicolorin B. The first step of the pathway is the conversion of acetate to norsolorinic acid (NOR) and requires the fatty acid synthase subunits hexA and hexB, as well as the polyketide synthase pksA. PksA combines a hexanoyl starter unit and 7 malonyl-CoA extender units to synthesize the precursor NOR. The hexanoyl starter unit is provided to the acyl-carrier protein (ACP) domain by the fungal fatty acid synthase hexA/hexB. The second step is the conversion of NOR to averantin (AVN) and requires the norsolorinic acid ketoreductase nor1, which catalyzes the dehydration of norsolorinic acid to form (1'S)-averantin. The cytochrome P450 monooxygenase avnA then catalyzes the hydroxylation of AVN to 5'hydroxyaverantin (HAVN). The next step is performed by adhA that transforms HAVN to averufin (AVF). Averufin might then be converted to hydroxyversicolorone by cypX and avfA. Hydroxyversicolorone is further converted versiconal hemiacetal acetate (VHA) by moxY. VHA is then the substrate for the versiconal hemiacetal acetate esterase est1 to yield versiconal (VAL). Versicolorin B synthase vbsA then converts VAL to versicolorin B (VERB) by closing the bisfuran ring. Then, the activity of the versicolorin B desaturase verB leads to versicolorin A (VERA). DotB, a predicted chloroperoxidase, may perform epoxidation of the A-ring of VERA. Alternatively, a cytochrome P450, such as cypX or avnA could catalyze this step. It is also possible that another, uncharacterized, cytochrome P450 enzyme is responsible for this step. Opening of the epoxide could potentially be achieved by the epoxide hydrolase epoA. However, epoA seems not to be required for DOTH biosynthesis, but other epoxide hydrolases may have the ability to complement this hydrolysis. Alternatively, opening of the epoxide ring could be achieved non-enzymatically. The next step is the deoxygenation of ring A to yield the 5,8-dihydroxyanthraquinone which is most likely catalyzed by the NADPH dehydrogenase encoded by ver1. The last stages of DOTH biosynthesis are proposed to involve hydroxylation of the bisfuran. OrdB and norB might have oxidative roles here. An alternative possibility is that cytochrome P450 monoogenases such as avnA and cypX might perform these steps in addition to previously proposed steps. The protein is Norsolorinic acid ketoreductase nor1 of Dothistroma septosporum (strain NZE10 / CBS 128990) (Red band needle blight fungus).